The chain runs to 1080 residues: ATP-dependent helicase/deoxyribonuclease subunit B (1080 aa).

The protein belongs to the helicase family. AddB/RexB type 2 subfamily. As to quaternary structure, heterodimer of AddA and RexB. The cofactor is Mg(2+).

Its function is as follows. The heterodimer acts as both an ATP-dependent DNA helicase and an ATP-dependent, dual-direction single-stranded exonuclease. Recognizes the chi site generating a DNA molecule suitable for the initiation of homologous recombination. This subunit has 5' -&gt; 3' nuclease activity but not helicase activity. This Streptococcus mutans serotype c (strain ATCC 700610 / UA159) protein is ATP-dependent helicase/deoxyribonuclease subunit B.